The chain runs to 85 residues: Latartoxin-1a (85 aa).

An N-terminal signal peptide occupies residues 1-19 (MKVLVFAIVCSVLLQVVLS). A propeptide spans 20-25 (ADEEAR) (removed in mature form). Residues 22–25 (EEAR) carry the Processing quadruplet motif motif. 4 disulfide bridges follow: C27–C42, C34–C47, C41–C64, and C49–C62.

It belongs to the neurotoxin 19 (CSTX) family. In terms of processing, contains 4 disulfide bonds. Cleavage of the propeptide depends on the processing quadruplet motif (XXXR, with at least one of X being E). In terms of tissue distribution, expressed by the venom gland.

The protein localises to the secreted. In terms of biological role, insect toxin. Causes paralysis in larvae of C.vicina by depolarizing membranes at the neuromuscular junction. This is Latartoxin-1a from Lachesana tarabaevi (Spider).